A 95-amino-acid polypeptide reads, in one-letter code: MSRISKEQVKHVAHLARLAITEEEAETFRNQLEDIITAAEQLNEVDTEGVVPTTHVLQMHNVLREDKPEKGLEVKEVLKNAPDHEDGQIRVPSVF.

It belongs to the GatC family. In terms of assembly, heterotrimer of A, B and C subunits.

The catalysed reaction is L-glutamyl-tRNA(Gln) + L-glutamine + ATP + H2O = L-glutaminyl-tRNA(Gln) + L-glutamate + ADP + phosphate + H(+). It catalyses the reaction L-aspartyl-tRNA(Asn) + L-glutamine + ATP + H2O = L-asparaginyl-tRNA(Asn) + L-glutamate + ADP + phosphate + 2 H(+). Functionally, allows the formation of correctly charged Asn-tRNA(Asn) or Gln-tRNA(Gln) through the transamidation of misacylated Asp-tRNA(Asn) or Glu-tRNA(Gln) in organisms which lack either or both of asparaginyl-tRNA or glutaminyl-tRNA synthetases. The reaction takes place in the presence of glutamine and ATP through an activated phospho-Asp-tRNA(Asn) or phospho-Glu-tRNA(Gln). In Shouchella clausii (strain KSM-K16) (Alkalihalobacillus clausii), this protein is Aspartyl/glutamyl-tRNA(Asn/Gln) amidotransferase subunit C.